Consider the following 317-residue polypeptide: Mitochondrial thiamine pyrophosphate carrier 1 (317 aa).

Helical transmembrane passes span 15–37 (TVSW…MATA), 80–100 (IPAT…YSWF), 118–138 (LTVG…LDLL), 168–190 (GFFT…MFLT), 205–227 (FWSR…TMVF), and 281–300 (GLTM…LFVY). 3 Solcar repeats span residues 16-103 (VSWY…FNNV), 112-197 (SQQG…VNIV), and 206-306 (WSRP…TMDL).

It belongs to the mitochondrial carrier (TC 2.A.29) family.

It is found in the mitochondrion inner membrane. Its function is as follows. Mitochondrial transporter that mediates uptake of thiamine pyrophosphate (ThPP) into mitochondria. This chain is Mitochondrial thiamine pyrophosphate carrier 1 (TPC1), found in Kluyveromyces lactis (strain ATCC 8585 / CBS 2359 / DSM 70799 / NBRC 1267 / NRRL Y-1140 / WM37) (Yeast).